A 212-amino-acid polypeptide reads, in one-letter code: Nascent polypeptide-associated complex subunit alpha-like protein 4 (212 aa).

The segment covering 25-35 has biased composition (basic and acidic residues); the sequence is QKENDVVVEDV. The disordered stretch occupies residues 25-74; sequence QKENDVVVEDVKDGDEDDDDVDDDDDEIADGAGENEASKQSRSEKKSRKA. Residues 36 to 53 show a composition bias toward acidic residues; it reads KDGDEDDDDVDDDDDEIA. In terms of domain architecture, NAC-A/B spans 65-130; it reads SRSEKKSRKA…AKIDDMSSQL (66 aa). One can recognise a UBA domain in the interval 173 to 210; the sequence is VEAKDIDLVMTQAGVSRPKAVKALKESNGDIVSAIMEL.

Belongs to the NAC-alpha family.

May promote appropriate targeting of ribosome-nascent polypeptide complexes. This is Nascent polypeptide-associated complex subunit alpha-like protein 4 from Arabidopsis thaliana (Mouse-ear cress).